The primary structure comprises 95 residues: UPF0045 protein CPE1503 (95 aa).

Belongs to the UPF0045 family.

The protein is UPF0045 protein CPE1503 of Clostridium perfringens (strain 13 / Type A).